The following is a 173-amino-acid chain: Adenine phosphoribosyltransferase (173 aa).

This sequence belongs to the purine/pyrimidine phosphoribosyltransferase family. Homodimer.

The protein localises to the cytoplasm. It carries out the reaction AMP + diphosphate = 5-phospho-alpha-D-ribose 1-diphosphate + adenine. The protein operates within purine metabolism; AMP biosynthesis via salvage pathway; AMP from adenine: step 1/1. Catalyzes a salvage reaction resulting in the formation of AMP, that is energically less costly than de novo synthesis. The chain is Adenine phosphoribosyltransferase from Chloroflexus aurantiacus (strain ATCC 29366 / DSM 635 / J-10-fl).